Here is a 210-residue protein sequence, read N- to C-terminus: Prolactin-2 (210 aa).

Residues 1-23 (MARRSQGTKLHLAVLCLVVSCHA) form the signal peptide. 2 cysteine pairs are disulfide-bonded: Cys69-Cys183 and Cys200-Cys210.

It belongs to the somatotropin/prolactin family.

It localises to the secreted. The protein is Prolactin-2 (prl2) of Oncorhynchus tshawytscha (Chinook salmon).